The following is a 132-amino-acid chain: Translation initiation factor 5A (132 aa).

A Hypusine modification is found at Lys-36.

This sequence belongs to the eIF-5A family.

The protein resides in the cytoplasm. In terms of biological role, functions by promoting the formation of the first peptide bond. The polypeptide is Translation initiation factor 5A (eIF5A) (Pyrobaculum arsenaticum (strain DSM 13514 / JCM 11321 / PZ6)).